The sequence spans 336 residues: MNKYNLVLLCGGGGSEHDISLLSAKYFESCLATLPRFNTLWLELTAEGQFRTREGEIVELTNRREIRFADEAKAPWSVDYVIPCIHGYPGETGDIQSWFNLIRLPYFGCGSEASSNCFNKITAKMWFSALGIPNTPYLYLDEPSNDAIARVEAAFDEWGSVFIKAASQGSSVGCFPAHRREDIPGLVRKAFEYAPFVVVEKTIKARELEVAVYDYQGEIVATRPGEIVCAANTFYSFEEKYDTKSQAVTHVEAPDVDEETVAAIRDYALRAFKGMKLRHLSRIDFFLTEDNQILLNEINTFPGLTQISMFPKMLAHHGHDFATFLEQAILAELEGR.

One can recognise an ATP-grasp domain in the interval 124–330 (KMWFSALGIP…FATFLEQAIL (207 aa)). An ATP-binding site is contributed by 154-209 (AFDEWGSVFIKAASQGSSVGCFPAHRREDIPGLVRKAFEYAPFVVVEKTIKARELE). Mg(2+)-binding residues include Asp284, Glu297, and Asn299.

The protein belongs to the D-alanine--D-alanine ligase family. Mg(2+) serves as cofactor. Mn(2+) is required as a cofactor.

The protein resides in the cytoplasm. It carries out the reaction 2 D-alanine + ATP = D-alanyl-D-alanine + ADP + phosphate + H(+). The protein operates within cell wall biogenesis; peptidoglycan biosynthesis. Functionally, cell wall formation. The polypeptide is D-alanine--D-alanine ligase (Shewanella amazonensis (strain ATCC BAA-1098 / SB2B)).